Reading from the N-terminus, the 121-residue chain is Small ribosomal subunit protein uS13 (121 aa).

Positions 94 to 121 (RGLPVRGQSTKNNARTRKGPKRTVGAKR) are disordered. Residues 107–121 (ARTRKGPKRTVGAKR) show a composition bias toward basic residues.

This sequence belongs to the universal ribosomal protein uS13 family. As to quaternary structure, part of the 30S ribosomal subunit. Forms a loose heterodimer with protein S19. Forms two bridges to the 50S subunit in the 70S ribosome.

Located at the top of the head of the 30S subunit, it contacts several helices of the 16S rRNA. In the 70S ribosome it contacts the 23S rRNA (bridge B1a) and protein L5 of the 50S subunit (bridge B1b), connecting the 2 subunits; these bridges are implicated in subunit movement. Contacts the tRNAs in the A and P-sites. This chain is Small ribosomal subunit protein uS13, found in Natranaerobius thermophilus (strain ATCC BAA-1301 / DSM 18059 / JW/NM-WN-LF).